Here is a 341-residue protein sequence, read N- to C-terminus: Phosphate acyltransferase (341 aa).

It belongs to the PlsX family. Homodimer. Probably interacts with PlsY.

The protein localises to the cytoplasm. The enzyme catalyses a fatty acyl-[ACP] + phosphate = an acyl phosphate + holo-[ACP]. It functions in the pathway lipid metabolism; phospholipid metabolism. Functionally, catalyzes the reversible formation of acyl-phosphate (acyl-PO(4)) from acyl-[acyl-carrier-protein] (acyl-ACP). This enzyme utilizes acyl-ACP as fatty acyl donor, but not acyl-CoA. This Vibrio parahaemolyticus serotype O3:K6 (strain RIMD 2210633) protein is Phosphate acyltransferase.